A 498-amino-acid polypeptide reads, in one-letter code: ATP synthase subunit beta, chloroplastic (498 aa).

An ATP-binding site is contributed by 172 to 179; that stretch reads GGAGVGKT.

It belongs to the ATPase alpha/beta chains family. In terms of assembly, F-type ATPases have 2 components, CF(1) - the catalytic core - and CF(0) - the membrane proton channel. CF(1) has five subunits: alpha(3), beta(3), gamma(1), delta(1), epsilon(1). CF(0) has four main subunits: a(1), b(1), b'(1) and c(9-12).

It localises to the plastid. Its subcellular location is the chloroplast thylakoid membrane. It catalyses the reaction ATP + H2O + 4 H(+)(in) = ADP + phosphate + 5 H(+)(out). In terms of biological role, produces ATP from ADP in the presence of a proton gradient across the membrane. The catalytic sites are hosted primarily by the beta subunits. The protein is ATP synthase subunit beta, chloroplastic of Drimys granadensis.